Consider the following 1032-residue polypeptide: Vacuolar membrane protease (1032 aa).

Residues 1–11 are Cytoplasmic-facing; that stretch reads MKLGNPFVFRP. A helical membrane pass occupies residues 12-32; the sequence is GPVSFWTTIVYLAIIIPLIYV. At 33 to 415 the chain is on the vacuolar side; it reads QETVPPAPSE…SAFALRGLFA (383 aa). Residues asparagine 50, asparagine 138, and asparagine 147 are each glycosylated (N-linked (GlcNAc...) asparagine). The Zn(2+) site is built by histidine 194 and aspartate 206. The active-site Proton acceptor is the glutamate 240. Zn(2+)-binding residues include glutamate 241, glutamate 266, and histidine 339. A helical membrane pass occupies residues 416–436; sequence WTLTLLITTPLVLFVVTYLLV. Over 437 to 469 the chain is Cytoplasmic; that stretch reads RDDKWYFFATKVDSTVGDGEETVSFGGWKGFVR. A helical membrane pass occupies residues 470-490; that stretch reads FPFALVVATALTIGSVFLLAK. Over 491 to 493 the chain is Vacuolar; sequence VNP. Residues 494 to 514 form a helical membrane-spanning segment; it reads LIIYSSGYSVWAMMISLFYFV. Topologically, residues 515-532 are cytoplasmic; that stretch reads SWLLLRGAHFVRPSALQR. Residues 533–553 traverse the membrane as a helical segment; that stretch reads GFTLIWLFIITWVLSVFAAVA. Residues 554 to 560 lie on the Vacuolar side of the membrane; it reads EDRMNMG. A helical transmembrane segment spans residues 561–581; sequence AVYPLAFLHTFAFAAVLISLL. Residues 582-701 lie on the Cytoplasmic side of the membrane; the sequence is EQYALPAKQD…WSGRLPTWTW (120 aa). Residues 595–688 are disordered; that stretch reads QVSGENEEEE…RKRSFPPYEN (94 aa). The span at 599–608 shows a compositional bias: acidic residues; the sequence is ENEEEEEQEQ. A compositionally biased stretch (polar residues) spans 651 to 660; that stretch reads SSEQTTTFAN. A helical transmembrane segment spans residues 702-722; it reads FIQLLLLVPLYVTVLGNLALV. Over 723 to 738 the chain is Vacuolar; that stretch reads QTTSIGKTGTDGSSLL. A helical transmembrane segment spans residues 739–759; it reads APLMGVGILAILLLLPLTPFI. The Cytoplasmic segment spans residues 760–766; that stretch reads HRVSHHV. The chain crosses the membrane as a helical span at residues 767–787; sequence PLFLFLVFIGTLIYNLTAFPF. Over 788-1032 the chain is Vacuolar; that stretch reads SDNNRFKFYF…VEITKKIKVA (245 aa). The N-linked (GlcNAc...) asparagine glycan is linked to asparagine 940.

Belongs to the peptidase M28 family. It depends on Zn(2+) as a cofactor.

The protein localises to the vacuole membrane. May be involved in vacuolar sorting and osmoregulation. This is Vacuolar membrane protease from Metarhizium robertsii (strain ARSEF 23 / ATCC MYA-3075) (Metarhizium anisopliae (strain ARSEF 23)).